A 476-amino-acid chain; its full sequence is Aspartyl/glutamyl-tRNA(Asn/Gln) amidotransferase subunit B (476 aa).

It belongs to the GatB/GatE family. GatB subfamily. As to quaternary structure, heterotrimer of A, B and C subunits.

It catalyses the reaction L-glutamyl-tRNA(Gln) + L-glutamine + ATP + H2O = L-glutaminyl-tRNA(Gln) + L-glutamate + ADP + phosphate + H(+). The catalysed reaction is L-aspartyl-tRNA(Asn) + L-glutamine + ATP + H2O = L-asparaginyl-tRNA(Asn) + L-glutamate + ADP + phosphate + 2 H(+). In terms of biological role, allows the formation of correctly charged Asn-tRNA(Asn) or Gln-tRNA(Gln) through the transamidation of misacylated Asp-tRNA(Asn) or Glu-tRNA(Gln) in organisms which lack either or both of asparaginyl-tRNA or glutaminyl-tRNA synthetases. The reaction takes place in the presence of glutamine and ATP through an activated phospho-Asp-tRNA(Asn) or phospho-Glu-tRNA(Gln). The sequence is that of Aspartyl/glutamyl-tRNA(Asn/Gln) amidotransferase subunit B from Moorella thermoacetica (strain ATCC 39073 / JCM 9320).